The sequence spans 309 residues: Dicarboxylate carrier UCP2 (309 aa).

Topologically, residues 1–16 (MVGFKATDVPPTATVK) are mitochondrial intermembrane. Solcar repeat units lie at residues 11 to 106 (PTAT…VKQF), 114 to 203 (AGIG…IKDA), and 212 to 297 (DDLP…LKRA). Positions 16-63 (KFLGAGTAACIADLITFPLDTAKVRLQIQGERQGPVRAAASAQYRGVL) are important for interaction with long-chain fatty acids. Residues 17-40 (FLGAGTAACIADLITFPLDTAKVR) traverse the membrane as a helical segment. Residues 41–77 (LQIQGERQGPVRAAASAQYRGVLCTILTMVRTEGPRS) are Mitochondrial matrix-facing. Residues 78 to 103 (LYSGLVAGLQRQMSFASVRIGLYDSV) traverse the membrane as a helical segment. Residues 104 to 119 (KQFYTKGSEHAGIGSR) lie on the Mitochondrial intermembrane side of the membrane. Residues 120–145 (LLAGSTTGALAVAVAQPTDVVKVRFQ) traverse the membrane as a helical segment. Topologically, residues 146–173 (AQARAGSGRRYQSTVDAYKTIAREEGFR) are mitochondrial matrix. A helical membrane pass occupies residues 174–199 (GLWKGTSPNVARNAIVNCAELVTYDL). Topologically, residues 200 to 217 (IKDALLKANLMTDDLPCH) are mitochondrial intermembrane. The helical transmembrane segment at 218-242 (FTSAFGAGFCTTVIASPVDVVKTRY) threads the bilayer. Residues 243 to 268 (MNSALGQYSSAGHCALTMLQKEGPRA) lie on the Mitochondrial matrix side of the membrane. Residues 269–294 (FYKGFMPSFLRLGSWNVVMFVTYEQL) form a helical membrane-spanning segment. Residues 278 to 285 (LRLGSWNV) are important for interaction with long-chain fatty acids. Residues 295-309 (KRALMAACTSREAPF) lie on the Mitochondrial intermembrane side of the membrane.

This sequence belongs to the mitochondrial carrier (TC 2.A.29) family. As to quaternary structure, homotetramer. Adopts an asymmetrical dimer of dimers functional form. Interacts with MICU1 (when methylated); leading to decrease the calcium sensitivity of MICU1.

Its subcellular location is the mitochondrion inner membrane. It carries out the reaction L-aspartate(out) + phosphate(in) + H(+)(in) = L-aspartate(in) + phosphate(out) + H(+)(out). The catalysed reaction is oxaloacetate(out) + phosphate(in) + H(+)(in) = oxaloacetate(in) + phosphate(out) + H(+)(out). The enzyme catalyses (S)-malate(out) + phosphate(in) + H(+)(in) = (S)-malate(in) + phosphate(out) + H(+)(out). It catalyses the reaction malonate(out) + phosphate(in) + H(+)(in) = malonate(in) + phosphate(out) + H(+)(out). It carries out the reaction sulfate(out) + phosphate(in) + H(+)(in) = sulfate(in) + phosphate(out) + H(+)(out). The catalysed reaction is (S)-malate(out) = (S)-malate(in). The enzyme catalyses L-aspartate(out) = L-aspartate(in). It catalyses the reaction phosphate(in) = phosphate(out). It carries out the reaction chloride(in) = chloride(out). The catalysed reaction is H(+)(in) = H(+)(out). The enzyme catalyses a long-chain fatty acid(out) = a long-chain fatty acid(in). Its function is as follows. Antiporter that exports dicarboxylate intermediates of the Krebs cycle in exchange for phosphate plus a proton across the inner membrane of mitochondria, a process driven by mitochondrial motive force with an overall impact on glycolysis, glutaminolysis and glutathione-dependent redox balance. Continuous export of oxaloacetate and related four-carbon dicarboxylates from mitochondrial matrix into the cytosol negatively regulates the oxidation of acetyl-CoA substrates via the Krebs cycle lowering the ATP/ADP ratio and reactive oxygen species (ROS) production. May mediate inducible proton entry into the mitochondrial matrix affecting ATP turnover as a protection mechanism against oxidative stress. The proton currents are most likely associated with fatty acid flipping across the inner membrane of mitochondria in a metabolic process regulated by free fatty acids and purine nucleotides. Regulates the use of glucose as a source of energy. Required for glucose-induced DRP1-dependent mitochondrial fission and neuron activation in the ventromedial nucleus of the hypothalamus (VMH). This mitochondrial adaptation mechanism modulates the VMH pool of glucose-excited neurons with an impact on systemic glucose homeostasis. Regulates ROS levels and metabolic reprogramming of macrophages during the resolution phase of inflammation. Attenuates ROS production in response to IL33 to preserve the integrity of the Krebs cycle required for persistent production of itaconate and subsequent GATA3-dependent differentiation of inflammation-resolving alternatively activated macrophages. Can unidirectionally transport anions including L-malate, L-aspartate, phosphate and chloride ions. Does not mediate adaptive thermogenesis. This is Dicarboxylate carrier UCP2 (UCP2) from Canis lupus familiaris (Dog).